The following is a 517-amino-acid chain: zeta-carotene-forming phytoene desaturase (517 aa).

FAD is bound at residue 11–44 (VVVGAGVGGLAAAARLAHQGFDVQVFEKTQGPGG).

The protein belongs to the carotenoid/retinoid oxidoreductase family. It depends on FAD as a cofactor.

It catalyses the reaction 15-cis-phytoene + 2 A = all-trans-zeta-carotene + 2 AH2. It participates in carotenoid biosynthesis; lycopene biosynthesis. Dehydrogenates carotenes in the cis conformation: has cis-to-trans isomerase activity and mediates dehydrogenation of cis-phytoene, producing zeta-carotene via the intermediary of phytofluene by the symmetrical introduction of 2 double bonds at the C-11 and C-11' positions of phytoene. In Myxococcus xanthus, this protein is zeta-carotene-forming phytoene desaturase (carA2).